A 203-amino-acid polypeptide reads, in one-letter code: MTEELTPKQAAVLEFIKKSIRQRGYPPSVREIGQEVGLSSSSTVHGYLKKLEEKGYLRRDATKPRAIEVLDNPAGEKVEFINVPVLGRVAAGVPLLAVENREDIFPLPVHFTGSGEFFMLTVRGDSMIEAGILNGDMVVVRRQQDAGNGDIVVALLEEEATVKRLFKENGRIRLQPENRLMEPIYAAEVQILGKVIGLVRKIY.

A DNA-binding region (H-T-H motif) is located at residues 29-49; that stretch reads VREIGQEVGLSSSSTVHGYLK. Catalysis depends on for autocatalytic cleavage activity residues serine 126 and lysine 163.

This sequence belongs to the peptidase S24 family. Homodimer.

It catalyses the reaction Hydrolysis of Ala-|-Gly bond in repressor LexA.. Its function is as follows. Represses a number of genes involved in the response to DNA damage (SOS response), including recA and lexA. In the presence of single-stranded DNA, RecA interacts with LexA causing an autocatalytic cleavage which disrupts the DNA-binding part of LexA, leading to derepression of the SOS regulon and eventually DNA repair. In Pelotomaculum thermopropionicum (strain DSM 13744 / JCM 10971 / SI), this protein is LexA repressor.